A 156-amino-acid polypeptide reads, in one-letter code: Arginine repressor (156 aa).

The protein belongs to the ArgR family.

The protein localises to the cytoplasm. It participates in amino-acid biosynthesis; L-arginine biosynthesis [regulation]. Its function is as follows. Regulates arginine biosynthesis genes. The polypeptide is Arginine repressor (Pectobacterium atrosepticum (strain SCRI 1043 / ATCC BAA-672) (Erwinia carotovora subsp. atroseptica)).